The chain runs to 240 residues: 4-hydroxy-tetrahydrodipicolinate reductase (240 aa).

NAD(+) contacts are provided by residues 79-81 and 103-106; these read ATT and SANM. The active-site Proton donor/acceptor is the H135. H136 provides a ligand contact to (S)-2,3,4,5-tetrahydrodipicolinate. The Proton donor role is filled by K139. 145 to 146 lines the (S)-2,3,4,5-tetrahydrodipicolinate pocket; the sequence is GT.

This sequence belongs to the DapB family.

The protein resides in the cytoplasm. It catalyses the reaction (S)-2,3,4,5-tetrahydrodipicolinate + NAD(+) + H2O = (2S,4S)-4-hydroxy-2,3,4,5-tetrahydrodipicolinate + NADH + H(+). It carries out the reaction (S)-2,3,4,5-tetrahydrodipicolinate + NADP(+) + H2O = (2S,4S)-4-hydroxy-2,3,4,5-tetrahydrodipicolinate + NADPH + H(+). The protein operates within amino-acid biosynthesis; L-lysine biosynthesis via DAP pathway; (S)-tetrahydrodipicolinate from L-aspartate: step 4/4. Its function is as follows. Catalyzes the conversion of 4-hydroxy-tetrahydrodipicolinate (HTPA) to tetrahydrodipicolinate. The polypeptide is 4-hydroxy-tetrahydrodipicolinate reductase (Staphylococcus aureus (strain JH1)).